Consider the following 130-residue polypeptide: Ion transport peptide (130 aa).

3 disulfide bridges follow: Cys-62-Cys-98, Cys-78-Cys-94, and Cys-81-Cys-107. Leu-127 carries the leucine amide modification.

Belongs to the arthropod CHH/MIH/GIH/VIH hormone family. As to expression, brain and corpus cardiacum.

The protein resides in the secreted. Stimulates salt and water reabsorption and inhibits acid secretion in the ileum of S.gregaria. The protein is Ion transport peptide of Schistocerca gregaria (Desert locust).